A 304-amino-acid polypeptide reads, in one-letter code: Sulfate adenylyltransferase subunit 2 (304 aa).

The protein belongs to the PAPS reductase family. CysD subfamily. As to quaternary structure, heterodimer composed of CysD, the smaller subunit, and CysN.

It carries out the reaction sulfate + ATP + H(+) = adenosine 5'-phosphosulfate + diphosphate. Its pathway is sulfur metabolism; hydrogen sulfide biosynthesis; sulfite from sulfate: step 1/3. In terms of biological role, with CysN forms the ATP sulfurylase (ATPS) that catalyzes the adenylation of sulfate producing adenosine 5'-phosphosulfate (APS) and diphosphate, the first enzymatic step in sulfur assimilation pathway. APS synthesis involves the formation of a high-energy phosphoric-sulfuric acid anhydride bond driven by GTP hydrolysis by CysN coupled to ATP hydrolysis by CysD. This is Sulfate adenylyltransferase subunit 2 from Halorhodospira halophila (strain DSM 244 / SL1) (Ectothiorhodospira halophila (strain DSM 244 / SL1)).